A 1538-amino-acid chain; its full sequence is Myosin-9 (1538 aa).

Residues 16 to 65 (SIGSHVWFEDPEVAWIDGEVEKINGQEVVIQATTGKKVTAKLSKIYPKDV) enclose the Myosin N-terminal SH3-like domain. A Myosin motor domain is found at 70–740 (GGVDDMTKLS…QMAELDARRA (671 aa)). ATP-binding positions include 164 to 171 (GESGAGKT) and 217 to 225 (NNNSSRFGK). Actin-binding stretches follow at residues 503-537 (LIEK…YQTF), 539-562 (THKR…AGEV), 597-621 (FPPL…KLQL), and 621-643 (LQQL…KPNN). 6 IQ domains span residues 743–772 (LSSA…ATIS), 766–795 (LRKA…EAAA), 791–820 (REAA…ASLV), 814–843 (LHVA…TKAA), 839–868 (QTKA…GVVL), and 862–891 (LKNG…AARE). The stretch at 892-1064 (TGALKEAKDM…VLRQQAVSMA (173 aa)) forms a coiled coil. Residues 1017–1032 (SLEDKKKKLEETEKKG) show a composition bias toward basic and acidic residues. Disordered stretches follow at residues 1017–1041 (SLED…SLTR) and 1098–1121 (SHSI…NEKQ). A Dilute domain is found at 1168 to 1481 (DRIIQTIGHA…IANMRVLMTE (314 aa)).

This sequence belongs to the TRAFAC class myosin-kinesin ATPase superfamily. Myosin family. Plant myosin class XI subfamily. As to quaternary structure, homodimer.

Its function is as follows. Myosin heavy chain that is required for the cell cycle-regulated transport of various organelles and proteins for their segregation. Functions by binding with its tail domain to receptor proteins on organelles and exerting force with its N-terminal motor domain against actin filaments, thereby transporting its cargo along polarized actin cables. Involved in trafficking of Golgi stacks and mitochondria. The protein is Myosin-9 (XI-C) of Arabidopsis thaliana (Mouse-ear cress).